We begin with the raw amino-acid sequence, 272 residues long: Putative UTP--glucose-1-phosphate uridylyltransferase (272 aa).

It belongs to the UDPGP type 2 family.

The enzyme catalyses alpha-D-glucose 1-phosphate + UTP + H(+) = UDP-alpha-D-glucose + diphosphate. The polypeptide is Putative UTP--glucose-1-phosphate uridylyltransferase (ytdA) (Bacillus subtilis (strain 168)).